Here is a 201-residue protein sequence, read N- to C-terminus: MQHAYDEHLATNRYFDRKFGLEAAKILPGEYYVANQEALLVTVLGSCVAACIRDADSGIGGMNHFMLPDDGGRDKVGMSARYGTYAMEVLINHLLKLGARRNRFEAKVFGGGAVLASLASSNVGARNAEFVLDFLKTEKIPVVAKDLLDSYPRKVYYFPYSGKVLVKKLHRVHNDTLFSRENDYKVRLSGAPMDGDIELFI.

The protein belongs to the CheD family.

It carries out the reaction L-glutaminyl-[protein] + H2O = L-glutamyl-[protein] + NH4(+). Functionally, probably deamidates glutamine residues to glutamate on methyl-accepting chemotaxis receptors (MCPs), playing an important role in chemotaxis. The sequence is that of Probable chemoreceptor glutamine deamidase CheD 1 from Dechloromonas aromatica (strain RCB).